The primary structure comprises 964 residues: SKI family transcriptional corepressor 1 (964 aa).

Disordered stretches follow at residues 45–72, 278–365, 414–452, 525–587, 610–766, and 793–842; these read TQLG…SSAL, RTFS…GGSA, AGEP…PGPG, AGGG…RKSS, REAY…GPAA, and YLCT…EDGL. The span at 283 to 310 shows a compositional bias: gly residues; that stretch reads QGGGGGGANSGSGGAGKGGAGGGGGPGC. Positions 345-355 are enriched in low complexity; that stretch reads ALGLAAAANGP. 2 stretches are compositionally biased toward gly residues: residues 356–365 and 417–440; these read AGPGGPGGSA and PKGG…GPGA. The segment covering 571–583 has biased composition (pro residues); sequence SLAPLAPPPPPPA. A compositionally biased stretch (acidic residues) spans 652 to 661; sequence DTADEPEVDV. The segment covering 798 to 808 has biased composition (basic and acidic residues); it reads ETHEPDKEDNH. Residues 823-834 show a composition bias toward polar residues; sequence DQRSVSQPSPAN. Residues 857–921 adopt a coiled-coil conformation; sequence ENLAREELQK…DTLCNELDQE (65 aa).

The protein belongs to the SKI family. Interacts with LBX1. Interacts with SMAD1, SMAD2 and SMAD3.

The protein localises to the nucleus. In terms of biological role, inhibits BMP signaling. Acts as a transcriptional corepressor of LBX1. This chain is SKI family transcriptional corepressor 1 (Skor1), found in Rattus norvegicus (Rat).